The primary structure comprises 251 residues: Hydroxyacylglutathione hydrolase (251 aa).

His-53, His-55, Asp-57, His-58, His-110, Asp-127, and His-165 together coordinate Zn(2+).

The protein belongs to the metallo-beta-lactamase superfamily. Glyoxalase II family. As to quaternary structure, monomer. It depends on Zn(2+) as a cofactor.

It catalyses the reaction an S-(2-hydroxyacyl)glutathione + H2O = a 2-hydroxy carboxylate + glutathione + H(+). The protein operates within secondary metabolite metabolism; methylglyoxal degradation; (R)-lactate from methylglyoxal: step 2/2. Its function is as follows. Thiolesterase that catalyzes the hydrolysis of S-D-lactoyl-glutathione to form glutathione and D-lactic acid. This chain is Hydroxyacylglutathione hydrolase, found in Escherichia coli O6:K15:H31 (strain 536 / UPEC).